Reading from the N-terminus, the 59-residue chain is Large ribosomal subunit protein uL30 (59 aa).

This sequence belongs to the universal ribosomal protein uL30 family. Part of the 50S ribosomal subunit.

The protein is Large ribosomal subunit protein uL30 of Geotalea uraniireducens (strain Rf4) (Geobacter uraniireducens).